The sequence spans 1516 residues: Myosin-14 (1516 aa).

The 50-residue stretch at 7–56 folds into the Myosin N-terminal SH3-like domain; sequence NVGSCVWVEDPEVAWIDGEVIEVKGSDIKVKCTSGKTVAIKVSSAYPKDV. Residues 61-738 enclose the Myosin motor domain; that stretch reads SGVDDMTRLA…QMADLDARRN (678 aa). ATP is bound by residues 155–162 and 208–216; these read GESGAGKT and NNNSSRFGK. 4 actin-binding regions span residues 494 to 528, 530 to 553, 588 to 612, and 612 to 634; these read LIEK…YQTF, DHKH…AGDV, FPLL…KQQL, and LVTL…KPNN. IQ domains follow at residues 741–770, 764–793, 789–818, 812–841, 837–866, and 860–889; these read LGRA…VATN, LRKV…DAAV, RDAA…AAVS, LYFA…DKAA, QDKA…AAIT, and LKKA…AAKE. The stretch at 890-1056 forms a coiled coil; sequence TGVLEAAKSK…ENKILRQKSL (167 aa). The disordered stretch occupies residues 1061–1085; the sequence is GHLPPTPVKGSQNGHFSSKESPFNG. The segment covering 1069–1084 has biased composition (polar residues); it reads KGSQNGHFSSKESPFN. Positions 1158 to 1463 constitute a Dilute domain; it reads DRLVQMIGSA…IANMRVLMTE (306 aa).

The protein belongs to the TRAFAC class myosin-kinesin ATPase superfamily. Myosin family. Plant myosin class XI subfamily. In terms of assembly, homodimer.

Functionally, myosin heavy chain that is required for the cell cycle-regulated transport of various organelles and proteins for their segregation. Functions by binding with its tail domain to receptor proteins on organelles and exerting force with its N-terminal motor domain against actin filaments, thereby transporting its cargo along polarized actin cables. In Arabidopsis thaliana (Mouse-ear cress), this protein is Myosin-14 (XI-H).